Consider the following 600-residue polypeptide: Elongation factor 4 (600 aa).

The tr-type G domain maps to 5–187 (KYIRNFSIIA…AIVNKLHPPK (183 aa)). Residues 17–22 (DHGKST) and 134–137 (NKID) contribute to the GTP site.

Belongs to the TRAFAC class translation factor GTPase superfamily. Classic translation factor GTPase family. LepA subfamily.

The protein localises to the cell inner membrane. It catalyses the reaction GTP + H2O = GDP + phosphate + H(+). Functionally, required for accurate and efficient protein synthesis under certain stress conditions. May act as a fidelity factor of the translation reaction, by catalyzing a one-codon backward translocation of tRNAs on improperly translocated ribosomes. Back-translocation proceeds from a post-translocation (POST) complex to a pre-translocation (PRE) complex, thus giving elongation factor G a second chance to translocate the tRNAs correctly. Binds to ribosomes in a GTP-dependent manner. The chain is Elongation factor 4 from Rickettsia akari (strain Hartford).